The sequence spans 389 residues: MVDLLNSVMNLVAPPATMVVMAFAWPLLSFISFSERAYNSYFATENMEDKVVVITGASSAIGEQIAYEYAKRGANLVLVARREQRLRVVSNKAKQIGANHVIIIAADVIKEDDCRRFITQAVNYYGRVDHLVNTASLGHTFYFEEVSDTTVFPHLLDINFWGNVYPTYVALPYLHQTNGRIVVNASVENWLPLPRMSLYSAAKAALVNFYETLRFELNGDVGITIATHGWIGSEMSGGKFMLEEGAEMQWKEEREVPANGGPLEEFAKMIVAGACRGDAYVKFPNWYDVFLLYRVFTPNVLRWTFKLLLSTEGTRRSSLVGVGSGMPVDESSSQMKLMLEGGPPRVPASPPRYTASPPHYTASPPRYPASPPRYPASPPRFSQFNIQEL.

Residues 11-31 (LVAPPATMVVMAFAWPLLSFI) traverse the membrane as a helical; Signal-anchor for type II membrane protein segment. Residues 56–82 (GASSAIGEQIAYEYAKRGANLVLVARR) and Asp107 each bind NADP(+). Residue Ser186 participates in substrate binding. Tyr199 serves as the catalytic Proton acceptor. Residues 199–203 (YSAAK) and Lys203 each bind NADP(+). The tract at residues 337-381 (LMLEGGPPRVPASPPRYTASPPHYTASPPRYPASPPRYPASPPRF) is disordered. Residues 365-378 (PRYPASPPRYPASP) are compositionally biased toward pro residues.

This sequence belongs to the short-chain dehydrogenases/reductases (SDR) family.

It localises to the membrane. The polypeptide is 11-beta-hydroxysteroid dehydrogenase-like 5 (HSD5) (Arabidopsis thaliana (Mouse-ear cress)).